The chain runs to 382 residues: Probable cytosolic iron-sulfur protein assembly protein 1 (382 aa).

WD repeat units follow at residues 9 to 48 (AHHDKIWSVSSHQKLPLLATGSSDKTSAIFRLSETEKFPR), 55 to 107 (THTR…DNDE), 138 to 178 (GHEH…EEFE), 185 to 224 (EHQQDVKHVIWHPTQNLLASSSYDDTICIYRQEYDDDDWG), 231 to 278 (GHQG…SETN), 303 to 342 (AHTYPVYSVVWSSVSGRIASAGADGKIAVYKQTDGVWEIE), and 349 to 382 (HGVHEINTLAWSKLDDNREVLVSGGDDGYVNVWE).

The protein belongs to the WD repeat CIA1 family. In terms of assembly, interacts with NAR1.

Its subcellular location is the cytoplasm. It is found in the nucleus. Essential component of the cytosolic iron-sulfur (Fe/S) protein assembly machinery. Required for the maturation of extramitochondrial Fe/S proteins. This chain is Probable cytosolic iron-sulfur protein assembly protein 1, found in Meyerozyma guilliermondii (strain ATCC 6260 / CBS 566 / DSM 6381 / JCM 1539 / NBRC 10279 / NRRL Y-324) (Yeast).